The primary structure comprises 583 residues: 5-aminolevulinate synthase, erythroid-specific, mitochondrial (583 aa).

Residue R158 coordinates succinyl-CoA. Positions 253 and 254 each coordinate pyridoxal 5'-phosphate. Residues S275 and R294 each coordinate succinyl-CoA. Residues S327, H355, and T383 each coordinate pyridoxal 5'-phosphate. Residue K386 is part of the active site. Position 386 is an N6-(pyridoxal phosphate)lysine (K386). Pyridoxal 5'-phosphate contacts are provided by T415 and T416. A succinyl-CoA-binding site is contributed by T503.

The protein belongs to the class-II pyridoxal-phosphate-dependent aminotransferase family. Homodimer. Requires pyridoxal 5'-phosphate as cofactor.

It is found in the mitochondrion inner membrane. It carries out the reaction succinyl-CoA + glycine + H(+) = 5-aminolevulinate + CO2 + CoA. Its pathway is porphyrin-containing compound metabolism; protoporphyrin-IX biosynthesis; 5-aminolevulinate from glycine: step 1/1. In terms of biological role, catalyzes the pyridoxal 5'-phosphate (PLP)-dependent condensation of succinyl-CoA and glycine to form aminolevulinic acid (ALA), with CoA and CO2 as by-products. Contributes significantly to heme formation during erythropoiesis. This is 5-aminolevulinate synthase, erythroid-specific, mitochondrial (alas2) from Danio rerio (Zebrafish).